The following is a 35-amino-acid chain: Photosystem II reaction center protein M (35 aa).

The residue at position 1 (Met-1) is an N-formylmethionine. Residues 7–28 (GFIASILFVLVPTVFLLILFIQ) form a helical membrane-spanning segment.

The protein belongs to the PsbM family. PSII is composed of 1 copy each of membrane proteins PsbA, PsbB, PsbC, PsbD, PsbE, PsbF, PsbH, PsbI, PsbJ, PsbK, PsbL, PsbM, PsbT, PsbX, PsbY, PsbZ, Psb30/Ycf12, peripheral proteins PsbO, CyanoQ (PsbQ), PsbU, PsbV and a large number of cofactors. It forms dimeric complexes.

The protein localises to the cellular thylakoid membrane. One of the components of the core complex of photosystem II (PSII). PSII is a light-driven water:plastoquinone oxidoreductase that uses light energy to abstract electrons from H(2)O, generating O(2) and a proton gradient subsequently used for ATP formation. It consists of a core antenna complex that captures photons, and an electron transfer chain that converts photonic excitation into a charge separation. This subunit is found at the monomer-monomer interface. Involved in assembly of monomeric PSII from the CP43-less intermediate. This chain is Photosystem II reaction center protein M, found in Synechocystis sp. (strain ATCC 27184 / PCC 6803 / Kazusa).